We begin with the raw amino-acid sequence, 265 residues long: 4-hydroxy-tetrahydrodipicolinate reductase (265 aa).

NAD(+)-binding positions include 7–12 and D33; that span reads GASGRM. R34 provides a ligand contact to NADP(+). NAD(+) is bound by residues 96–98 and 120–123; these read GTT and SANM. Residue H153 is the Proton donor/acceptor of the active site. H154 contributes to the (S)-2,3,4,5-tetrahydrodipicolinate binding site. The Proton donor role is filled by K157. 163–164 serves as a coordination point for (S)-2,3,4,5-tetrahydrodipicolinate; it reads GT.

This sequence belongs to the DapB family.

The protein resides in the cytoplasm. It catalyses the reaction (S)-2,3,4,5-tetrahydrodipicolinate + NAD(+) + H2O = (2S,4S)-4-hydroxy-2,3,4,5-tetrahydrodipicolinate + NADH + H(+). It carries out the reaction (S)-2,3,4,5-tetrahydrodipicolinate + NADP(+) + H2O = (2S,4S)-4-hydroxy-2,3,4,5-tetrahydrodipicolinate + NADPH + H(+). It functions in the pathway amino-acid biosynthesis; L-lysine biosynthesis via DAP pathway; (S)-tetrahydrodipicolinate from L-aspartate: step 4/4. In terms of biological role, catalyzes the conversion of 4-hydroxy-tetrahydrodipicolinate (HTPA) to tetrahydrodipicolinate. This is 4-hydroxy-tetrahydrodipicolinate reductase from Burkholderia pseudomallei (strain 1106a).